A 318-amino-acid chain; its full sequence is Malonyl-S-ACP:biotin-protein carboxyltransferase MADC (318 aa).

Residues 2–257 (AKWTELQDKS…VLQKPMEEIE (256 aa)) form the CoA carboxyltransferase N-terminal domain.

Its subcellular location is the cytoplasm. The catalysed reaction is N(6)-biotinyl-L-lysyl-[protein] + malonyl-[ACP] = N(6)-carboxybiotinyl-L-lysyl-[protein] + acetyl-[ACP]. Gamma subunit of the biotin-dependent malonate decarboxylase multienzyme complex (EC 7.2.4.4). The two subunits MADC and MADD are required for the transfer of the malonate carboxy group from the acyl-carrier protein (ACP) to the prosthetic group of the biotin carrier MADF. Required for the regeneration of ACP. In Malonomonas rubra, this protein is Malonyl-S-ACP:biotin-protein carboxyltransferase MADC (madC).